The chain runs to 237 residues: uncharacterized protein (237 aa).

Residues methionine 1–glycine 25 constitute a signal peptide (tat-type signal). The tract at residues isoleucine 201–proline 237 is disordered.

Post-translationally, exported by the Tat system. The position of the signal peptide cleavage has not been experimentally proven. Can also be exported by the Sec system.

This is an uncharacterized protein from Escherichia coli (strain K12).